We begin with the raw amino-acid sequence, 496 residues long: Probable malate:quinone oxidoreductase (496 aa).

It belongs to the MQO family. It depends on FAD as a cofactor.

The enzyme catalyses (S)-malate + a quinone = a quinol + oxaloacetate. The protein operates within carbohydrate metabolism; tricarboxylic acid cycle; oxaloacetate from (S)-malate (quinone route): step 1/1. The protein is Probable malate:quinone oxidoreductase of Prochlorococcus marinus (strain MIT 9303).